Here is a 207-residue protein sequence, read N- to C-terminus: Transcriptional regulator YqjI (207 aa).

The span at 1–40 shows a compositional bias: basic and acidic residues; that stretch reads MSHHHEGCCKHEGQPRHEGCCKGEKSEHEHCGHGHQHEHG. Residues 1 to 46 form a disordered region; it reads MSHHHEGCCKHEGQPRHEGCCKGEKSEHEHCGHGHQHEHGQCCGGR.

In terms of assembly, oligomer (probable predominant form) and monomer.

Its activity is regulated as follows. Divalent metals such as nickel and iron have a similar negative effect on YqjI DNA-binding activity. Represses the expression of YqjH which is involved in iron homeostasis under excess nickel conditions. Also represses its own expression. This Escherichia coli (strain K12) protein is Transcriptional regulator YqjI (yqjI).